Reading from the N-terminus, the 328-residue chain is Putative GDP-L-fucose synthase 2 (328 aa).

An N-acetylalanine modification is found at alanine 2. 26–32 (GHRGLVG) serves as a coordination point for NADP(+). The Proton donor/acceptor role is filled by tyrosine 152. Residues lysine 156, 179 to 182 (PTNL), and histidine 195 each bind NADP(+). The substrate site is built by arginine 203, tryptophan 218, arginine 225, and aspartate 285.

Belongs to the NAD(P)-dependent epimerase/dehydratase family. Fucose synthase subfamily. In terms of assembly, homodimer.

The enzyme catalyses GDP-beta-L-fucose + NADP(+) = GDP-4-dehydro-alpha-D-rhamnose + NADPH + H(+). The protein operates within nucleotide-sugar biosynthesis; GDP-L-fucose biosynthesis via de novo pathway; GDP-L-fucose from GDP-alpha-D-mannose: step 2/2. Catalyzes the two-step NADP-dependent conversion of GDP-4-dehydro-6-deoxy-D-mannose to GDP-fucose, involving an epimerase and a reductase reaction. The polypeptide is Putative GDP-L-fucose synthase 2 (GER2) (Arabidopsis thaliana (Mouse-ear cress)).